The sequence spans 264 residues: Thymidylate synthase (264 aa).

A dUMP-binding site is contributed by Arg21. His51 is a binding site for (6R)-5,10-methylene-5,6,7,8-tetrahydrofolate. 126-127 (RR) contributes to the dUMP binding site. The Nucleophile role is filled by Cys146. DUMP is bound by residues 166 to 169 (RSAD), Asn177, and 207 to 209 (HLY). Asp169 lines the (6R)-5,10-methylene-5,6,7,8-tetrahydrofolate pocket. Ala263 provides a ligand contact to (6R)-5,10-methylene-5,6,7,8-tetrahydrofolate.

This sequence belongs to the thymidylate synthase family. Bacterial-type ThyA subfamily. As to quaternary structure, homodimer.

Its subcellular location is the cytoplasm. It catalyses the reaction dUMP + (6R)-5,10-methylene-5,6,7,8-tetrahydrofolate = 7,8-dihydrofolate + dTMP. Its pathway is pyrimidine metabolism; dTTP biosynthesis. Its function is as follows. Catalyzes the reductive methylation of 2'-deoxyuridine-5'-monophosphate (dUMP) to 2'-deoxythymidine-5'-monophosphate (dTMP) while utilizing 5,10-methylenetetrahydrofolate (mTHF) as the methyl donor and reductant in the reaction, yielding dihydrofolate (DHF) as a by-product. This enzymatic reaction provides an intracellular de novo source of dTMP, an essential precursor for DNA biosynthesis. This chain is Thymidylate synthase, found in Thiobacillus denitrificans (strain ATCC 25259 / T1).